We begin with the raw amino-acid sequence, 817 residues long: Disks large homolog 3 (817 aa).

2 positions are modified to N-acetylmethionine: M1 and H2. Residues 33 to 101 (WQVPDPYGPG…GKSTPKLNGS (69 aa)) are disordered. The span at 40–53 (GPGGGNGASAGYGG) shows a compositional bias: gly residues. The segment covering 57–69 (QTLPSQAGATPTP) has biased composition (polar residues). PDZ domains are found at residues 130-217 (EEIV…VRRR), 226-311 (EVNL…KVAK), and 379-465 (DFTR…VAQY). S139 is modified (phosphoserine). The region spanning 501 to 571 (KRSLYVRALF…PSKKRVEKKE (71 aa)) is the SH3 domain. Residues 627–802 (ARPVIILGPM…IYNKIKQIIE (176 aa)) form the Guanylate kinase-like domain. At Y673 the chain carries Phosphotyrosine.

It belongs to the MAGUK family. Interacts through its PDZ domains with NETO1, GRIN2B and SYNGAP1. Interacts through its guanylate kinase-like domain with DLGAP1, DLGAP2, DLGAP3 and DLGAP4. Interacts with FLTP/C1orf192. Interacts through its PDZ domains with APC. Interacts through its first two PDZ domains with ERBB4. Interacts through its third PDZ domain with NLGN1, and probably with NLGN2 and NLGN3. Interacts with FRMPD4 (via C-terminus). Interacts with LRFN1, LRFN2 and LRFN4. Interacts with DGKI (via PDZ-binding motif).

Its function is as follows. Required for learning most likely through its role in synaptic plasticity following NMDA receptor signaling. This is Disks large homolog 3 (DLG3) from Homo sapiens (Human).